The chain runs to 46 residues: Protein PsbN (46 aa).

A helical transmembrane segment spans residues 10–30; it reads VSIAVLTALLGLTGFGIYTAF.

Belongs to the PsbN family.

It is found in the cellular thylakoid membrane. May play a role in photosystem I and II biogenesis. This chain is Protein PsbN, found in Synechococcus sp. (strain RCC307).